Here is a 169-residue protein sequence, read N- to C-terminus: Cell division inhibitor SulA (169 aa).

The tract at residues 106–112 is ftsZ binding; that stretch reads ALRTGNY. The interval 162–169 is lon protease binding; it reads KIHSNLYH.

This sequence belongs to the SulA family. Interacts with FtsZ. In terms of processing, is rapidly cleaved and degraded by the Lon protease once DNA damage is repaired.

Functionally, component of the SOS system and an inhibitor of cell division. Accumulation of SulA causes rapid cessation of cell division and the appearance of long, non-septate filaments. In the presence of GTP, binds a polymerization-competent form of FtsZ in a 1:1 ratio, thus inhibiting FtsZ polymerization and therefore preventing it from participating in the assembly of the Z ring. This mechanism prevents the premature segregation of damaged DNA to daughter cells during cell division. The sequence is that of Cell division inhibitor SulA from Shigella flexneri serotype 5b (strain 8401).